The sequence spans 245 residues: 5'-nucleotidase SurE (245 aa).

A divalent metal cation is bound by residues D8, D9, S39, and N91.

The protein belongs to the SurE nucleotidase family. It depends on a divalent metal cation as a cofactor.

Its subcellular location is the cytoplasm. The enzyme catalyses a ribonucleoside 5'-phosphate + H2O = a ribonucleoside + phosphate. Its function is as follows. Nucleotidase that shows phosphatase activity on nucleoside 5'-monophosphates. This chain is 5'-nucleotidase SurE, found in Psychromonas ingrahamii (strain DSM 17664 / CCUG 51855 / 37).